The primary structure comprises 85 residues: Beta-insect depressant toxin BmKITa (85 aa).

Residues 1 to 21 (MKLFLLLLISASMLIDGLVNA) form the signal peptide. In terms of domain architecture, LCN-type CS-alpha/beta spans 22-82 (DGYIRGSNGC…TWKSESNTCG (61 aa)). Intrachain disulfides connect cysteine 31–cysteine 81, cysteine 35–cysteine 56, cysteine 42–cysteine 63, and cysteine 46–cysteine 65. Glycine 82 is modified (glycine amide).

As to expression, expressed by the venom gland.

Its subcellular location is the secreted. Functionally, depressant insect beta-toxins cause a transient contraction paralysis followed by a slow flaccid paralysis. They bind voltage-independently at site-4 of sodium channels (Nav) and shift the voltage of activation toward more negative potentials thereby affecting sodium channel activation and promoting spontaneous and repetitive firing. This toxin also displays an evident analgesic effect but is devoid of any toxicity on mice. The polypeptide is Beta-insect depressant toxin BmKITa (Olivierus martensii (Manchurian scorpion)).